A 285-amino-acid chain; its full sequence is Complement C1q tumor necrosis factor-related protein 2 (285 aa).

Residues 1–15 (MIPWVLLACALPCAA) form the signal peptide. The segment at 33–144 (QLVCSLPGPQ…PGLPGPCSCG (112 aa)) is disordered. In terms of domain architecture, Collagen-like spans 40 to 141 (GPQGPPGPPG…KGEPGLPGPC (102 aa)). The span at 41–51 (PQGPPGPPGAP) shows a compositional bias: pro residues. Residues 53-65 (PSGMMGRMGFPGK) are compositionally biased toward low complexity. Over residues 66-78 (DGQDGHDGDRGDS) the composition is skewed to basic and acidic residues. Low complexity predominate over residues 84-120 (PGRTGNRGKPGPKGKAGAIGRAGPRGPKGVNGTPGKH). The 137-residue stretch at 145-281 (SGHTKSAFSV…GFLIYADQDD (137 aa)) folds into the C1q domain.

In terms of assembly, may interact with ERFE. In terms of tissue distribution, expressed in adipose tissue.

It localises to the secreted. In terms of biological role, involved in the regulation of lipid metabolism in adipose tissue and liver. The sequence is that of Complement C1q tumor necrosis factor-related protein 2 (C1QTNF2) from Homo sapiens (Human).